The following is a 316-amino-acid chain: L-lactate dehydrogenase (316 aa).

34 to 39 is a binding site for NAD(+); the sequence is DVVEGV. Residues arginine 89, asparagine 121, and arginine 152 each contribute to the substrate site. Asparagine 121 provides a ligand contact to NAD(+). Histidine 172 functions as the Proton acceptor in the catalytic mechanism.

The protein belongs to the LDH/MDH superfamily. LDH family. Homotetramer.

It carries out the reaction (S)-lactate + NAD(+) = pyruvate + NADH + H(+). The protein operates within fermentation; pyruvate fermentation to lactate; (S)-lactate from pyruvate: step 1/1. This Botryococcus braunii (Green alga) protein is L-lactate dehydrogenase.